A 148-amino-acid polypeptide reads, in one-letter code: Deoxyuridine 5'-triphosphate nucleotidohydrolase (148 aa).

Residues 65-67 (RSG), Asn78, 82-84 (TID), and Lys92 contribute to the substrate site.

It belongs to the dUTPase family. It depends on Mg(2+) as a cofactor.

It carries out the reaction dUTP + H2O = dUMP + diphosphate + H(+). The protein operates within pyrimidine metabolism; dUMP biosynthesis; dUMP from dCTP (dUTP route): step 2/2. In terms of biological role, this enzyme is involved in nucleotide metabolism: it produces dUMP, the immediate precursor of thymidine nucleotides and it decreases the intracellular concentration of dUTP so that uracil cannot be incorporated into DNA. This is Deoxyuridine 5'-triphosphate nucleotidohydrolase from Chlorobium phaeovibrioides (strain DSM 265 / 1930) (Prosthecochloris vibrioformis (strain DSM 265)).